The following is a 239-amino-acid chain: Probable GTP-binding protein EngB (239 aa).

In terms of domain architecture, EngB-type G spans Gln-23–Leu-219. Residues Gly-31–Ser-38, Gly-58–His-62, Asp-92–Gly-95, Thr-159–Asp-162, and Phe-193–Ala-200 contribute to the GTP site. Residues Ser-38 and Thr-60 each contribute to the Mg(2+) site.

The protein belongs to the TRAFAC class TrmE-Era-EngA-EngB-Septin-like GTPase superfamily. EngB GTPase family. It depends on Mg(2+) as a cofactor.

Functionally, necessary for normal cell division and for the maintenance of normal septation. This chain is Probable GTP-binding protein EngB, found in Herminiimonas arsenicoxydans.